Reading from the N-terminus, the 500-residue chain is MPSPEEDPQPLLKDQEETAYDSDGKVLSFGIDYDTESGGSTVVPSFSWRKLWLFTGPGFLMCIAFLDPGNLEGDLQAGAIAGYSLLWLLLWATAMGLLVQLLSARLGVATGRHLAELCREEYPTWARMILWIMAELALIGADIQEVIGSAIAIQILSNGVLPLWAGVIITASDCFIFLFLENYGVRKLEAAFGILIGIMAVTFAWMFADAKPSAPELFLGILIPKLSSKTIKQAVGVVGCIIMPHNVFLHSALVQSREIDHNKKGQVQEALRYYSIESTAALAISFMINLFVTTIFAKGFHGTELANSIGLVNAGQYLQDKYGGGFFPILYIWGIGLLAAGQSSTITGTYAGQFIMGGFLNLGLKKWLRALITRSCAIIPTIIVALVFDTSEDSLDVLNEWLNMLQSIQIPFALIPLLCLVSKEQIMGTFTVGPILKMVSWLVAALVMLINGYLLLDFFSNEVTGVVFTTVVCAFTGAYVTFIIYLISREVTISTWYCPT.

The next 12 membrane-spanning stretches (helical) occupy residues 51 to 71 (LWLF…PGNL), 79 to 99 (AIAG…GLLV), 128 to 148 (MILW…EVIG), 160 to 180 (VLPL…FLFL), 188 to 208 (LEAA…WMFA), 234 to 254 (AVGV…SALV), 280 to 300 (AALA…AKGF), 322 to 342 (YGGG…AAGQ), 370 to 390 (ALIT…VFDT), 401 to 421 (WLNM…LCLV), 439 to 459 (VSWL…LDFF), and 467 to 487 (VFTT…IYLI).

Belongs to the NRAMP (TC 2.A.55) family. As to expression, expressed in roots, stems, buds and leaves.

It is found in the golgi apparatus. The protein localises to the trans-Golgi network membrane. The enzyme catalyses Mn(2+)(in) = Mn(2+)(out). It carries out the reaction Fe(2+)(in) = Fe(2+)(out). In terms of biological role, divalent metal transporter. Can transport manganese (Mn) and iron (Fe). Involved in the control of cell-to-cell transport of manganese (Mn) between organs and tissues to monitor Mn homeostasis. In Populus trichocarpa (Western balsam poplar), this protein is Metal transporter Nramp3.1.